Consider the following 269-residue polypeptide: Diaminopimelate epimerase (269 aa).

Substrate contacts are provided by N13, Q47, and N65. The active-site Proton donor is the C74. Substrate contacts are provided by residues 75–76, N149, N182, and 200–201; these read GN and ER. Residue C209 is the Proton acceptor of the active site. Substrate is bound at residue 210 to 211; the sequence is GT.

The protein belongs to the diaminopimelate epimerase family. In terms of assembly, homodimer.

The protein resides in the cytoplasm. The catalysed reaction is (2S,6S)-2,6-diaminopimelate = meso-2,6-diaminopimelate. Its pathway is amino-acid biosynthesis; L-lysine biosynthesis via DAP pathway; DL-2,6-diaminopimelate from LL-2,6-diaminopimelate: step 1/1. In terms of biological role, catalyzes the stereoinversion of LL-2,6-diaminopimelate (L,L-DAP) to meso-diaminopimelate (meso-DAP), a precursor of L-lysine and an essential component of the bacterial peptidoglycan. The sequence is that of Diaminopimelate epimerase from Erythrobacter litoralis (strain HTCC2594).